Reading from the N-terminus, the 955-residue chain is MSQLLQQLGTDNEFIRRHNGPASSQHQHMLNTVGAETLEKLIEETVPSSIRLPQPMQLPHGLSENAMLAELKQIAQQNTLNTSYIGQGYYNTHTPNVILRNVFENPGWYTAYTPYQPEISQGRLEALLNYQQMVMDLTGLDIANASLLDEATAAAEAMTLCKRGGKNKSSTFFVADDVHPQTLAVIKTRAKFIGFDVVVDTDSNLDSHDVFGALLQYPGTTGEVKDLTTLIEQAHAKKTLVVVATDLLASVLLKPVGEMGADIAIGSAQRFGVPMGYGGPHAAFMATREKLKRSMPGRVIGVSIDSKGNQALRMAMQTREQHIRREKATSNICTAQALLANMASFYAVYHGPEGLKTIARRVHHFTAIVAKSLQSAGFELAHQHFFDTLTVKTEQQTDILYTKALAASINLRKFDTELGISFDETTTVSDLVALLAVFGVDNAECDSLSNDIGQDEFAAIPEACRRTSSFLTHPVFNTHHSETQMLRYLKKLENKDFSLTHGMIPLGSCTMKLNAVAEMLPVTWPEFGGIHPFAPLNQAAGYTTLATSLKSMLCEITGYDDFSLQPNSGASGEYAGLIAIQRYHESRNEGHRNVCLIPSSAHGTNPATASMVSMKVVVVKCDDNGNIDMIDLAEKIAKHQENLSSIMITYPSTHGVYEEQVREVCDMVHDAGGQVYLDGANMNAQVGLTSPGFIGSDVSHLNLHKTFCIPHGGGGPGMGPIGVKSHLAPFLPGHSENGVQGSDYAVSAADLGSASILPISWAYIAMMGEMGLTEATKVAILNANYVMDRLRPHYPVLYRGTNGRIAHECIIDIRPLKEATGISEEDIAKRLMDFGFHAPTMSFPVAGTLMIEPTESEDLAELDRFCEAMIAIREEMNKVQQGEWPLDNNPLVNAPHTQVDLMSNEWDHPYTREVACFPSVQAKASKYWPTVNRVDNVYGDRNLICSCPSIDSYEE.

Lys-705 carries the post-translational modification N6-(pyridoxal phosphate)lysine.

Belongs to the GcvP family. In terms of assembly, the glycine cleavage system is composed of four proteins: P, T, L and H. Pyridoxal 5'-phosphate is required as a cofactor.

It catalyses the reaction N(6)-[(R)-lipoyl]-L-lysyl-[glycine-cleavage complex H protein] + glycine + H(+) = N(6)-[(R)-S(8)-aminomethyldihydrolipoyl]-L-lysyl-[glycine-cleavage complex H protein] + CO2. Its function is as follows. The glycine cleavage system catalyzes the degradation of glycine. The P protein binds the alpha-amino group of glycine through its pyridoxal phosphate cofactor; CO(2) is released and the remaining methylamine moiety is then transferred to the lipoamide cofactor of the H protein. This is Glycine dehydrogenase (decarboxylating) from Aliivibrio salmonicida (strain LFI1238) (Vibrio salmonicida (strain LFI1238)).